Consider the following 320-residue polypeptide: Aspartate carbamoyltransferase catalytic subunit (320 aa).

Residues arginine 53 and threonine 54 each coordinate carbamoyl phosphate. Lysine 82 serves as a coordination point for L-aspartate. Residues arginine 103, histidine 131, and glutamine 134 each contribute to the carbamoyl phosphate site. Residues arginine 164 and arginine 227 each contribute to the L-aspartate site. Carbamoyl phosphate contacts are provided by leucine 266 and proline 267.

This sequence belongs to the aspartate/ornithine carbamoyltransferase superfamily. ATCase family. Heterododecamer (2C3:3R2) of six catalytic PyrB chains organized as two trimers (C3), and six regulatory PyrI chains organized as three dimers (R2).

The catalysed reaction is carbamoyl phosphate + L-aspartate = N-carbamoyl-L-aspartate + phosphate + H(+). It participates in pyrimidine metabolism; UMP biosynthesis via de novo pathway; (S)-dihydroorotate from bicarbonate: step 2/3. Its function is as follows. Catalyzes the condensation of carbamoyl phosphate and aspartate to form carbamoyl aspartate and inorganic phosphate, the committed step in the de novo pyrimidine nucleotide biosynthesis pathway. This is Aspartate carbamoyltransferase catalytic subunit from Bifidobacterium longum (strain NCC 2705).